A 200-amino-acid chain; its full sequence is Ras-related protein Rab-10 (200 aa).

Serine 18, glycine 19, valine 20, glycine 21, lysine 22, threonine 23, cysteine 24, asparagine 35, threonine 36, serine 40, and threonine 41 together coordinate GTP. Mg(2+) is bound at residue threonine 23. 2 short sequence motifs (switch) span residues 32 to 46 (DAFN…GIDF) and 64 to 81 (DTAG…YYRG). Positions 41 and 64 each coordinate Mg(2+). The GTP site is built by glycine 67, asparagine 122, lysine 123, aspartate 125, methionine 126, serine 152, alanine 153, and lysine 154. The segment at 181-200 (RENVDISTTGGGTGLKKCCS) is disordered. S-geranylgeranyl cysteine attachment occurs at residues cysteine 198 and cysteine 199.

Belongs to the small GTPase superfamily. Rab family. Mg(2+) serves as cofactor.

The protein resides in the cytoplasmic vesicle membrane. It is found in the golgi apparatus. It localises to the trans-Golgi network membrane. Its subcellular location is the endosome membrane. The protein localises to the recycling endosome membrane. The protein resides in the cytoplasmic vesicle. It is found in the phagosome membrane. It localises to the cell projection. Its subcellular location is the cilium. The protein localises to the endoplasmic reticulum membrane. It carries out the reaction GTP + H2O = GDP + phosphate + H(+). With respect to regulation, regulated by guanine nucleotide exchange factors (GEFs) which promote the exchange of bound GDP for free GTP. Regulated by GTPase activating proteins (GAPs) which increase the GTP hydrolysis activity. Inhibited by GDP dissociation inhibitors (GDIs) which prevent Rab-GDP dissociation. The small GTPases Rab are key regulators of intracellular membrane trafficking, from the formation of transport vesicles to their fusion with membranes. Rabs cycle between an inactive GDP-bound form and an active GTP-bound form that is able to recruit to membranes different set of downstream effectors directly responsible for vesicle formation, movement, tethering and fusion. That Rab is mainly involved in the biosynthetic transport of proteins from the Golgi to the plasma membrane. Also plays a specific role in asymmetric protein transport to the plasma membrane within the polarized neuron and epithelial cells. In neurons, it is involved in axonogenesis through regulation of vesicular membrane trafficking toward the axonal plasma membrane while in epithelial cells, it regulates transport from the Golgi to the basolateral membrane. Moreover, may play a role in the basolateral recycling pathway and in phagosome maturation. Finally, may play a role in endoplasmic reticulum dynamics and morphology controlling tubulation along microtubules and tubules fusion. May participate in the export of neosynthesized proteins through a Rab-dependent endosomal export route. The sequence is that of Ras-related protein Rab-10 from Diplobatis ommata (Ocellated electric ray).